The primary structure comprises 214 residues: Probable GTP-binding protein EngB (214 aa).

The EngB-type G domain occupies 24-199 (GGYEVAFAGR…RGIVGGWLGL (176 aa)). GTP is bound by residues 32–39 (GRSNAGKS), 59–63 (GRTQQ), 77–80 (DLPG), 144–147 (TKAD), and 178–180 (YSG). 2 residues coordinate Mg(2+): Ser39 and Thr61.

It belongs to the TRAFAC class TrmE-Era-EngA-EngB-Septin-like GTPase superfamily. EngB GTPase family. Mg(2+) serves as cofactor.

Necessary for normal cell division and for the maintenance of normal septation. The chain is Probable GTP-binding protein EngB from Xanthomonas axonopodis pv. citri (strain 306).